Consider the following 423-residue polypeptide: Serine--tRNA ligase 2 (423 aa).

231 to 233 (TAE) is an L-serine binding site. An ATP-binding site is contributed by 262 to 264 (RSE). Position 285 (E285) interacts with L-serine. An ATP-binding site is contributed by 349–352 (EISS). S384 serves as a coordination point for L-serine.

The protein belongs to the class-II aminoacyl-tRNA synthetase family. Type-1 seryl-tRNA synthetase subfamily. As to quaternary structure, homodimer. The tRNA molecule binds across the dimer.

The protein resides in the cytoplasm. It carries out the reaction tRNA(Ser) + L-serine + ATP = L-seryl-tRNA(Ser) + AMP + diphosphate + H(+). The catalysed reaction is tRNA(Sec) + L-serine + ATP = L-seryl-tRNA(Sec) + AMP + diphosphate + H(+). It functions in the pathway aminoacyl-tRNA biosynthesis; selenocysteinyl-tRNA(Sec) biosynthesis; L-seryl-tRNA(Sec) from L-serine and tRNA(Sec): step 1/1. Catalyzes the attachment of serine to tRNA(Ser). Is also able to aminoacylate tRNA(Sec) with serine, to form the misacylated tRNA L-seryl-tRNA(Sec), which will be further converted into selenocysteinyl-tRNA(Sec). In Enterococcus faecalis (strain ATCC 700802 / V583), this protein is Serine--tRNA ligase 2.